The primary structure comprises 448 residues: Methylenetetrahydrofolate--tRNA-(uracil-5-)-methyltransferase TrmFO (448 aa).

13-18 (GAGLAG) contacts FAD.

The protein belongs to the MnmG family. TrmFO subfamily. FAD serves as cofactor.

It localises to the cytoplasm. It catalyses the reaction uridine(54) in tRNA + (6R)-5,10-methylene-5,6,7,8-tetrahydrofolate + NADH + H(+) = 5-methyluridine(54) in tRNA + (6S)-5,6,7,8-tetrahydrofolate + NAD(+). The catalysed reaction is uridine(54) in tRNA + (6R)-5,10-methylene-5,6,7,8-tetrahydrofolate + NADPH + H(+) = 5-methyluridine(54) in tRNA + (6S)-5,6,7,8-tetrahydrofolate + NADP(+). Functionally, catalyzes the folate-dependent formation of 5-methyl-uridine at position 54 (M-5-U54) in all tRNAs. This chain is Methylenetetrahydrofolate--tRNA-(uracil-5-)-methyltransferase TrmFO, found in Streptococcus pyogenes serotype M1.